The primary structure comprises 104 residues: Replication restart protein PriB (104 aa).

Residues 1–101 enclose the SSB domain; sequence MTNRLALSGT…LHAEQIELID (101 aa).

This sequence belongs to the PriB family. Homodimer. Interacts with PriA and DnaT. Component of the replication restart primosome. Primosome assembly occurs via a 'hand-off' mechanism. PriA binds to replication forks, subsequently PriB then DnaT bind; DnaT then displaces ssDNA to generate the helicase loading substrate.

In terms of biological role, involved in the restart of stalled replication forks, which reloads the replicative helicase on sites other than the origin of replication; the PriA-PriB pathway is the major replication restart pathway. During primosome assembly it facilitates complex formation between PriA and DnaT on DNA; stabilizes PriA on DNA. Stimulates the DNA unwinding activity of PriA helicase. In Salmonella agona (strain SL483), this protein is Replication restart protein PriB.